We begin with the raw amino-acid sequence, 167 residues long: Lipoprotein signal peptidase (167 aa).

A run of 3 helical transmembrane segments spans residues 8–28 (FFLLGLILTVGIDQTVKYWIM), 61–81 (FSHWGLIALTLIILIFLLWLW), and 93–113 (FGLTLIIGGAIGNLIDRICFY). Active-site residues include Asp117 and Asp136. The chain crosses the membrane as a helical span at residues 126–146 (IFYFAVFNLADTFITLGVIAI).

Belongs to the peptidase A8 family.

Its subcellular location is the cell inner membrane. The catalysed reaction is Release of signal peptides from bacterial membrane prolipoproteins. Hydrolyzes -Xaa-Yaa-Zaa-|-(S,diacylglyceryl)Cys-, in which Xaa is hydrophobic (preferably Leu), and Yaa (Ala or Ser) and Zaa (Gly or Ala) have small, neutral side chains.. The protein operates within protein modification; lipoprotein biosynthesis (signal peptide cleavage). Its function is as follows. This protein specifically catalyzes the removal of signal peptides from prolipoproteins. This chain is Lipoprotein signal peptidase, found in Bartonella quintana (strain Toulouse) (Rochalimaea quintana).